The following is a 273-amino-acid chain: Large ribosomal subunit protein uL29m (273 aa).

Over residues 247 to 258 (PLRHDRWEKGQE) the composition is skewed to basic and acidic residues. The disordered stretch occupies residues 247-273 (PLRHDRWEKGQEENSGGETEDGNAPSN).

The protein belongs to the universal ribosomal protein uL29 family. As to quaternary structure, component of the mitochondrial large ribosomal subunit. Mature mitochondrial ribosomes consist of a small (37S) and a large (54S) subunit. The 37S subunit contains at least 33 different proteins and 1 molecule of RNA (15S). The 54S subunit contains at least 45 different proteins and 1 molecule of RNA (21S).

It is found in the mitochondrion. The chain is Large ribosomal subunit protein uL29m (mrpl4) from Aspergillus niger (strain ATCC MYA-4892 / CBS 513.88 / FGSC A1513).